The chain runs to 341 residues: L-threonine 3-dehydrogenase (341 aa).

Zn(2+) is bound at residue cysteine 38. Catalysis depends on charge relay system residues threonine 40 and histidine 43. Histidine 63, glutamate 64, cysteine 93, cysteine 96, cysteine 99, and cysteine 107 together coordinate Zn(2+). Residues isoleucine 175, aspartate 195, arginine 200, 262-264, and 286-287 contribute to the NAD(+) site; these read LGI and IY.

It belongs to the zinc-containing alcohol dehydrogenase family. In terms of assembly, homotetramer. It depends on Zn(2+) as a cofactor.

It localises to the cytoplasm. The catalysed reaction is L-threonine + NAD(+) = (2S)-2-amino-3-oxobutanoate + NADH + H(+). The protein operates within amino-acid degradation; L-threonine degradation via oxydo-reductase pathway; glycine from L-threonine: step 1/2. Functionally, catalyzes the NAD(+)-dependent oxidation of L-threonine to 2-amino-3-ketobutyrate. In Escherichia coli O157:H7, this protein is L-threonine 3-dehydrogenase.